Consider the following 305-residue polypeptide: Mas-related G-protein coupled receptor member A8 (305 aa).

At 1–17 (MDKTILGSIDIETLIRH) the chain is on the extracellular side. Residues 18–38 (LMIIIFGLVGLTGNAIVFWLL) traverse the membrane as a helical segment. Over 39-46 (GFHLHRNA) the chain is Cytoplasmic. Residues 47 to 67 (FLVYILNLALADFFYLLCHII) form a helical membrane-spanning segment. Topologically, residues 68–85 (NSIMFLLKVPSPNIILDH) are extracellular. Residues 86-106 (CFYTIMIVLYITGLSMLSAIS) traverse the membrane as a helical segment. Over 107–129 (TERCLSVLCPIWYRCHRPEHTST) the chain is Cytoplasmic. A helical transmembrane segment spans residues 130 to 150 (AMCAVIWVMSLLISILNGYFC). N-linked (GlcNAc...) asparagine glycans are attached at residues N151 and N159. The Extracellular segment spans residues 151–172 (NFSSPKYVNNSVCQASDIFIRT). The chain crosses the membrane as a helical span at residues 173 to 193 (YPIFLFVLLCLSTLALLARLF). Over 194 to 207 (SGAGKRKFTRLFVT) the chain is Cytoplasmic. Residues 208-228 (IMLAILVFLLCGLPLGFFWFL) traverse the membrane as a helical segment. Residues 229–243 (SPWIEDRFIVLDYRL) are Extracellular-facing. Residues 244–264 (FFASVVLTVVNSCANPIIYFF) traverse the membrane as a helical segment. The Cytoplasmic segment spans residues 265–305 (VGSFRHRLKQQTLKMFLQRALQDTPETPENMVEMSRSKAEP).

Belongs to the G-protein coupled receptor 1 family. Mas subfamily. In terms of tissue distribution, expressed in a subset of sensory neurons that includes nociceptors. Expressed in the subclass of non-peptidergic sensory neurons that are IB4(+) and VR1(-).

The protein localises to the cell membrane. In terms of biological role, orphan receptor. May be a receptor for RFamide-family neuropeptides such as NPFF and NPAF, which are analgesic in vivo. May regulate nociceptor function and/or development, including the sensation or modulation of pain. This Mus musculus (Mouse) protein is Mas-related G-protein coupled receptor member A8 (Mrgpra8).